The chain runs to 76 residues: MSKGVLVGVVTDARRDKTVKVSVYRMVHHKVYKKIVKKCRVYSVHDEQNRCARGDVVKIREHVPISATKRWIVVDE.

Belongs to the universal ribosomal protein uS17 family. Part of the 30S ribosomal subunit.

Its function is as follows. One of the primary rRNA binding proteins, it binds specifically to the 5'-end of 16S ribosomal RNA. This chain is Small ribosomal subunit protein uS17, found in Anaplasma phagocytophilum (strain HZ).